The chain runs to 401 residues: Anhydro-N-acetylmuramic acid kinase (401 aa).

Position 25 to 32 (25 to 32 (GTSLDGLD)) interacts with ATP.

It belongs to the anhydro-N-acetylmuramic acid kinase family.

The enzyme catalyses 1,6-anhydro-N-acetyl-beta-muramate + ATP + H2O = N-acetyl-D-muramate 6-phosphate + ADP + H(+). The protein operates within amino-sugar metabolism; 1,6-anhydro-N-acetylmuramate degradation. It functions in the pathway cell wall biogenesis; peptidoglycan recycling. In terms of biological role, catalyzes the specific phosphorylation of 1,6-anhydro-N-acetylmuramic acid (anhMurNAc) with the simultaneous cleavage of the 1,6-anhydro ring, generating MurNAc-6-P. Is required for the utilization of anhMurNAc either imported from the medium or derived from its own cell wall murein, and thus plays a role in cell wall recycling. This is Anhydro-N-acetylmuramic acid kinase from Pseudoalteromonas atlantica (strain T6c / ATCC BAA-1087).